The primary structure comprises 227 residues: Urease accessory protein UreF (227 aa).

It belongs to the UreF family. In terms of assembly, ureD, UreF and UreG form a complex that acts as a GTP-hydrolysis-dependent molecular chaperone, activating the urease apoprotein by helping to assemble the nickel containing metallocenter of UreC. The UreE protein probably delivers the nickel.

Its subcellular location is the cytoplasm. In terms of biological role, required for maturation of urease via the functional incorporation of the urease nickel metallocenter. This is Urease accessory protein UreF from Bacillus sp. (strain TB-90).